Consider the following 333-residue polypeptide: Mitochondrial fission regulator 1 (333 aa).

Phosphoserine is present on Ser-119. Basic and acidic residues predominate over residues 286–307 (YRSDSQDEVEKGVPKSESEATS). Positions 286-315 (YRSDSQDEVEKGVPKSESEATSERVLFGPH) are disordered.

The protein belongs to the MTFR1 family.

It localises to the mitochondrion. Functionally, may play a role in mitochondrial aerobic respiration. May also regulate mitochondrial organization and fission. This Pongo abelii (Sumatran orangutan) protein is Mitochondrial fission regulator 1 (MTFR1).